The following is a 33-amino-acid chain: Photosystem II reaction center protein Psb30 (33 aa).

A helical membrane pass occupies residues 5-25; it reads LIVQLTSLILISIAGPIIIAL.

The protein belongs to the Psb30/Ycf12 family. PSII is composed of 1 copy each of membrane proteins PsbA, PsbB, PsbC, PsbD, PsbE, PsbF, PsbH, PsbI, PsbJ, PsbK, PsbL, PsbM, PsbT, PsbY, PsbZ, Psb30/Ycf12, peripheral proteins of the oxygen-evolving complex and a large number of cofactors. It forms dimeric complexes.

It localises to the plastid. The protein resides in the chloroplast thylakoid membrane. Its function is as follows. A core subunit of photosystem II (PSII), probably helps stabilize the reaction center. The sequence is that of Photosystem II reaction center protein Psb30 from Euglena myxocylindracea.